We begin with the raw amino-acid sequence, 474 residues long: Hydrogenobyrinate a,c-diamide synthase (474 aa).

Positions 269-459 (VVAVAGGQAF…LHTHWAGCPQ (191 aa)) constitute a GATase cobBQ-type domain. C352 (nucleophile) is an active-site residue.

The protein belongs to the CobB/CbiA family. It depends on Mg(2+) as a cofactor.

It catalyses the reaction hydrogenobyrinate + 2 L-glutamine + 2 ATP + 2 H2O = hydrogenobyrinate a,c-diamide + 2 L-glutamate + 2 ADP + 2 phosphate + 2 H(+). It functions in the pathway cofactor biosynthesis; adenosylcobalamin biosynthesis; cob(II)yrinate a,c-diamide from precorrin-2 (aerobic route): step 9/10. In terms of biological role, catalyzes the ATP-dependent amidation of the two carboxylate groups at positions a and c of hydrogenobyrinate, using either L-glutamine or ammonia as the nitrogen source. The polypeptide is Hydrogenobyrinate a,c-diamide synthase (Thermobifida fusca (strain YX)).